We begin with the raw amino-acid sequence, 401 residues long: uncharacterized protein (401 aa).

Belongs to the serpin family.

Its function is as follows. May act as an inhibitor for a host chymotrypsin-like protease. This is an uncharacterized protein from Acanthamoeba polyphaga mimivirus (APMV).